The sequence spans 378 residues: L-asparaginase-like protein GF11609 (378 aa).

Residues 1–21 form the signal peptide; it reads MCSPLPLLILRLLLLTHPSLG. 3 cysteine pairs are disulfide-bonded: Cys71–Cys76, Cys170–Cys186, and Cys325–Cys352.

The protein belongs to the Ntn-hydrolase family.

The sequence is that of L-asparaginase-like protein GF11609 from Drosophila ananassae (Fruit fly).